We begin with the raw amino-acid sequence, 87 residues long: Small ribosomal subunit protein bS20 (87 aa).

A disordered region spans residues 1 to 22 (MANSAQARKRARQSLKARAHNA). Over residues 7–19 (ARKRARQSLKARA) the composition is skewed to basic residues.

Belongs to the bacterial ribosomal protein bS20 family.

Functionally, binds directly to 16S ribosomal RNA. In Laribacter hongkongensis (strain HLHK9), this protein is Small ribosomal subunit protein bS20.